The chain runs to 131 residues: MLHLHIFSWVIGIILFIVSYISFTKTGAPKKAYKPLHMTLRLFLVLILFSGVWQVVEEFATATGSTHMLLTLKMICGIGVVALMEVTLVRKQRGASHKGLFWGTIALIIVTMALGIILPGGPISNMFVITK.

The next 4 membrane-spanning stretches (helical) occupy residues 1–21 (MLHL…VSYI), 42–62 (LFLV…FATA), 69–89 (LLTL…VTLV), and 99–119 (GLFW…IILP).

This sequence belongs to the UPF0344 family.

It localises to the cell membrane. This is UPF0344 protein Sca_0577 from Staphylococcus carnosus (strain TM300).